Consider the following 395-residue polypeptide: MRIVSGMRPTGKLHLGHYFGVIRNWVKLQEEHECFFFIADWHALTTAYKNTKELRQNIREVMIDWLALGLDPQKSVLFIQSLVKEHAELFLLFGMITPKSWLELNPTYKDLKYNLLRLTDLEKEFKEKLKERISEIVNLIPFNITKEEKFREHLLENLTQTMIEALFEGEIEPEILKRLNVSKRDFYETDTFGFLGYPVLQAADILIYKGEGVPVGEDQLPHIELSREIARRFNRLYGKIFPEPKALLTETPKIPGTDGRKMSKSYGNAVFFSDEKEEVEKKVMKMFTDPQKIRKNDPGRPEICPVFSWHKLFTKDEELVKKIEEDCRAGRLGCVECKRILLKHLEEFLEPIRERRRELEKRINEIEEVFYENSRKAREIAQKTMEEVRKAMNLP.

Residues 8–10 (RPT) and 16–17 (GH) contribute to the ATP site. The 'HIGH' region signature appears at 9-17 (PTGKLHLGH). The insert stretch occupies residues 117–179 (RLTDLEKEFK…EIEPEILKRL (63 aa)). Residue D204 coordinates L-tryptophan. Residues 216–218 (GED), I254, and 261–265 (KMSKS) contribute to the ATP site. The 'KMSKS' region signature appears at 261-265 (KMSKS).

The protein belongs to the class-I aminoacyl-tRNA synthetase family. In terms of assembly, homodimer.

The protein resides in the cytoplasm. The enzyme catalyses tRNA(Trp) + L-tryptophan + ATP = L-tryptophyl-tRNA(Trp) + AMP + diphosphate + H(+). Catalyzes the attachment of tryptophan to tRNA(Trp). This is Tryptophan--tRNA ligase from Aquifex aeolicus (strain VF5).